A 245-amino-acid chain; its full sequence is Photosystem II protein PSBS1 (245 aa).

A chloroplast-targeting transit peptide spans Met-1–Tyr-25. 4 helical membrane-spanning segments follow: residues Leu-72–Thr-92, Gly-108–Leu-128, Leu-185–Phe-205, and Glu-217–Gly-237.

This sequence belongs to the ELIP/psbS family.

It is found in the plastid. It localises to the chloroplast thylakoid membrane. Its function is as follows. Required for non-photochemical quenching (NPQ), a mechanism that converts and dissipates the harmful excess absorbed light energy into heat and protect the photosynthetic apparatus from photo-oxidative damage. Seems involved in the activation of NPQ, possibly by promoting conformational changes required for activation of LHCSR3-dependent quenching in the antenna of photosystem II (PSII). This is Photosystem II protein PSBS1 from Chlamydomonas reinhardtii (Chlamydomonas smithii).